The following is a 452-amino-acid chain: SAGA complex/transcription factor TFIID complex subunit Taf6 (452 aa).

The Histone-fold domain occupies 4–68 (TVWNIESIKD…TSADISSALR (65 aa)).

The protein belongs to the TAF6 family. In terms of assembly, component of the 1.8 MDa SAGA (Spt-Ada-Gcn5 acetyltransferase) complex, which is composed of 19 subunits tra1, spt7, taf5, ngg1/ada3, sgf73, spt20, spt8, taf12, taf6, hfi1/ada1, ubp8, gcn5, ada2, spt3, sgf29, taf10, taf9, sgf11 and sus1. The SAGA complex is composed of 4 modules, namely the HAT (histone acetyltransferase) module (gcn5, ada2, ngg1/ada3 and sgf29), the DUB (deubiquitinating) module (ubp8, sgf11, sgf73 and sus1), the core or TAF (TBP-associated factor) module (taf5, taf6, taf9, taf10 and taf12), and the Tra1 or SPT (Suppressor of Ty) module (tra1, hfi1/ada1, spt3, spt7, spt8 and spt20). The Tra1/SPT module binds activators, the core module recruits TBP (TATA-binding protein), the HAT module contains the histone H3 acetyltransferase gcn5, and the DUB module comprises the histone H2B deubiquitinase ubp8. Interacts with gcn5, taf5 and taf73. Component of the 1.2 MDa TFIID complex, which is composed of TATA-binding protein (TBP) and the 14 TBP-associated factors (TAFs). It comprises 1 copy of each taf1, taf2, taf3, taf7, taf8, taf11, taf13, 2 copies of each taf4, taf5, taf6, taf9, taf10, taf12, and 3 copies of taf14. In TFIID, taf6 heterodimerizes with taf9, forming ultimately an octamer consisting of a taf6-taf9 heterotetramer core flanked by taf4-taf12 dimers on either side, similar to the histone H2A-H2B-H3-H4 octamer.

Its subcellular location is the nucleus. Its function is as follows. Functions as a component of both the DNA-binding general transcription initiation factor complex TFIID and the transcription coactivator SAGA complex. Binding of TFIID to a promoter (with or without TATA element) is the initial step in pre-initiation complex (PIC) formation. TFIID plays a key role in the regulation of gene expression by RNA polymerase II through different activities such as transcription activator interaction, core promoter recognition and selectivity, TFIIA and TFIIB interaction, chromatin modification (histone acetylation by TAF1), facilitation of DNA opening and initiation of transcription. SAGA acts as a general cofactor required for essentially all RNA polymerase II transcription. At the promoters, SAGA is required for transcription pre-initiation complex (PIC) recruitment. It influences RNA polymerase II transcriptional activity through different activities such as TBP interaction (via core/TAF module) and promoter selectivity, interaction with transcription activators (via Tra1/SPT module), and chromatin modification through histone acetylation (via HAT module) and deubiquitination (via DUB module). SAGA preferentially acetylates histones H3 (to form H3K9ac, H3K14ac, H3K18ac and H3K23ac) and H2B and deubiquitinates histone H2B. SAGA interacts with DNA via upstream activating sequences (UASs). The polypeptide is SAGA complex/transcription factor TFIID complex subunit Taf6 (Schizosaccharomyces pombe (strain 972 / ATCC 24843) (Fission yeast)).